A 305-amino-acid chain; its full sequence is N-acetylneuraminate lyase 2 (305 aa).

Aceneuramate is bound by residues Ser47 and Thr48. Catalysis depends on Tyr137, which acts as the Proton donor. Residue Lys165 is the Schiff-base intermediate with substrate of the active site. 5 residues coordinate aceneuramate: Thr167, Gly189, Asp191, Glu192, and Ser208.

It belongs to the DapA family. NanA subfamily. Homotetramer.

The protein localises to the cytoplasm. The enzyme catalyses aceneuramate = aldehydo-N-acetyl-D-mannosamine + pyruvate. The protein operates within amino-sugar metabolism; N-acetylneuraminate degradation; D-fructose 6-phosphate from N-acetylneuraminate: step 1/5. Functionally, catalyzes the reversible aldol cleavage of N-acetylneuraminic acid (sialic acid; Neu5Ac) to form pyruvate and N-acetylmannosamine (ManNAc) via a Schiff base intermediate. The protein is N-acetylneuraminate lyase 2 of Escherichia coli O6:H1 (strain CFT073 / ATCC 700928 / UPEC).